Reading from the N-terminus, the 393-residue chain is Yellow-related salivary protein SP03B (393 aa).

Positions 1–18 are cleaved as a signal peptide; it reads MKIFLCLIAVVFLQGVVG. The N-linked (GlcNAc...) asparagine glycan is linked to N29.

It belongs to the major royal jelly protein family. In terms of tissue distribution, female salivary gland (at protein level).

Its subcellular location is the secreted. Functionally, probably modulates blood feeding of sand flies on vertebrate species by binding and sequestering different mediators involved in the host response. Binds biogenic amines. Binds serotonin with high affinity. Poorly binds histamine. Does not bind dopamine, noradrenaline, adrenaline and octopamine. In Phlebotomus perniciosus (Phlebotomine sand fly), this protein is Yellow-related salivary protein SP03B.